Here is a 384-residue protein sequence, read N- to C-terminus: Omega-6 fatty acid desaturase, endoplasmic reticulum (384 aa).

Positions 1 to 23 are disordered; that stretch reads MGAGGRMQVSPSPKKSETDTLKR. Residues 14–23 show a composition bias toward basic and acidic residues; the sequence is KKSETDTLKR. 2 helical membrane-spanning segments follow: residues 56–76 and 84–104; these read LIWDIIVASCFYYVATTYFPL and VAWPLYWACQGVVLTGVWVIA. A Histidine box-1 motif is present at residues 105-109; that stretch reads HECGH. Residues 117–137 form a helical membrane-spanning segment; sequence WLDDTVGLIFHSFLLVPYFSW. Positions 141-145 match the Histidine box-2 motif; the sequence is HRRHH. The next 3 membrane-spanning stretches (helical) occupy residues 180 to 200, 226 to 246, and 253 to 273; these read VMLTVQFTLGWPLYWAFNVSG, IYVSDAGILAVCYGLYRYAAA, and VCLYGVPLLIVNAFLVLITYL. The Histidine box-3 signature appears at 316 to 320; sequence HVAHH.

This sequence belongs to the fatty acid desaturase type 1 family.

Its subcellular location is the endoplasmic reticulum membrane. It participates in lipid metabolism; polyunsaturated fatty acid biosynthesis. ER (microsomal) omega-6 fatty acid desaturase introduces the second double bond in the biosynthesis of 18:3 fatty acids, important constituents of plant membranes. It is thought to use cytochrome b5 as an electron donor and to act on fatty acids esterified to phosphatidylcholine and, possibly, other phospholipids. In Brassica juncea (Indian mustard), this protein is Omega-6 fatty acid desaturase, endoplasmic reticulum.